The sequence spans 277 residues: Tumor necrosis factor-inducible gene 6 protein (277 aa).

An N-terminal signal peptide occupies residues 1-17 (MIILIYLFLLLWEDTQG). One can recognise a Link domain in the interval 36–129 (GVYHREARSG…SERWDAYCYN (94 aa)). Disulfide bonds link Cys58/Cys127, Cys82/Cys103, and Cys135/Cys161. Asn118 carries N-linked (GlcNAc...) asparagine glycosylation. The CUB domain occupies 135 to 247 (CGGVFTDPKQ…GGFQIKYVAM (113 aa)). Residues Glu183, Asp191, Asp232, Ser234, and Val235 each contribute to the Ca(2+) site. Cys188 and Cys210 are disulfide-bonded. Asn258 carries an N-linked (GlcNAc...) asparagine glycan.

As to quaternary structure, interacts (via Link domain) with inter-alpha-inhibitor (I-alpha-I) component bikunin. Interacts with ITIH2/HC2; this interaction is required for transesterification of the HC to hyaluronan. Interacts (via Link and CUB domains) with ITIH1. Chondroitin sulfate may be required for the stability of the complex. Interacts (via Link domain) with various C-X-C and C-C chemokines including PF4, CXCL8, CXCL11, CXCL12, CCL2, CCL7, CCL19, CCL21, and CCL27; this interaction interferes with chemokine binding to glycosaminoglycans. Interacts (primarily via Link domain) with BMP2; this interaction is inhibited by hyaluronan. Interacts (via both Link and CUB domains) with TNFSF11. Interacts (via CUB domain) with FN1 (via type III repeats 9-14); this interaction enhances fibronectin fibril assembly. TNFAIP6 may act as a bridging molecule between FN1 and THBS1. In terms of processing, N-glycosylated. In terms of tissue distribution, expressed in airway epithelium and submucosal gland (at protein level). Colocalizes with bikunin at the ciliary border. Present in bronchoalveolar lavage fluid (at protein level). Expressed in mesenchymal stem cells. Found in the synovial fluid of patients with rheumatoid arthritis.

The protein resides in the secreted. Functionally, major regulator of extracellular matrix organization during tissue remodeling. Catalyzes the transfer of a heavy chain (HC) from inter-alpha-inhibitor (I-alpha-I) complex to hyaluronan. Cleaves the ester bond between the C-terminus of the HC and GalNAc residue of the chondroitin sulfate chain in I-alpha-I complex followed by transesterification of the HC to hyaluronan. In the process, potentiates the antiprotease function of I-alpha-I complex through release of free bikunin. Acts as a catalyst in the formation of hyaluronan-HC oligomers and hyaluronan-rich matrix surrounding the cumulus cell-oocyte complex, a necessary step for oocyte fertilization. Assembles hyaluronan in pericellular matrices that serve as platforms for receptor clustering and signaling. Enables binding of hyaluronan deposited on the surface of macrophages to LYVE1 on lymphatic endothelium and facilitates macrophage extravasation. Alters hyaluronan binding to functionally latent CD44 on vascular endothelium, switching CD44 into an active state that supports leukocyte rolling. Modulates the interaction of chemokines with extracellular matrix components and proteoglycans on endothelial cell surface, likely preventing chemokine gradient formation. In a negative feedback mechanism, may limit excessive neutrophil recruitment at inflammatory sites by antagonizing the association of CXCL8 with glycosaminoglycans on vascular endothelium. Has a role in osteogenesis and bone remodeling. Inhibits BMP2-dependent differentiation of mesenchymal stem cell to osteoblasts. Protects against bone erosion during inflammation by inhibiting TNFSF11/RANKL-dependent osteoclast activation. This Homo sapiens (Human) protein is Tumor necrosis factor-inducible gene 6 protein (TNFAIP6).